A 466-amino-acid chain; its full sequence is Methylenetetrahydrofolate--tRNA-(uracil-5-)-methyltransferase TrmFO (466 aa).

FAD is bound at residue Gly-14–Gly-19.

This sequence belongs to the MnmG family. TrmFO subfamily. FAD serves as cofactor.

The protein localises to the cytoplasm. The enzyme catalyses uridine(54) in tRNA + (6R)-5,10-methylene-5,6,7,8-tetrahydrofolate + NADH + H(+) = 5-methyluridine(54) in tRNA + (6S)-5,6,7,8-tetrahydrofolate + NAD(+). The catalysed reaction is uridine(54) in tRNA + (6R)-5,10-methylene-5,6,7,8-tetrahydrofolate + NADPH + H(+) = 5-methyluridine(54) in tRNA + (6S)-5,6,7,8-tetrahydrofolate + NADP(+). Catalyzes the folate-dependent formation of 5-methyl-uridine at position 54 (M-5-U54) in all tRNAs. This chain is Methylenetetrahydrofolate--tRNA-(uracil-5-)-methyltransferase TrmFO, found in Brucella canis (strain ATCC 23365 / NCTC 10854 / RM-666).